The primary structure comprises 103 residues: Large ribosomal subunit protein bL21 (103 aa).

Belongs to the bacterial ribosomal protein bL21 family. In terms of assembly, part of the 50S ribosomal subunit. Contacts protein L20.

This protein binds to 23S rRNA in the presence of protein L20. This Ruthia magnifica subsp. Calyptogena magnifica protein is Large ribosomal subunit protein bL21.